Here is a 1507-residue protein sequence, read N- to C-terminus: DE-cadherin (1507 aa).

An N-terminal signal peptide occupies residues 1 to 69 (MSTSVQRMSR…AISLLSPALA (69 aa)). Positions 70 to 261 (LHSPPDKNFS…IYLKRPIDKR (192 aa)) are excised as a propeptide. 7 consecutive Cadherin domains span residues 97–195 (VKEE…APAF), 204–301 (MSEN…PPSF), 311–412 (LKEN…IPYY), 420–522 (ILEN…KPHF), 532–633 (LLED…TILE), 631–733 (ILEE…APFL), and 741–835 (WQEN…NDNA). The Extracellular portion of the chain corresponds to 262 to 1328 (PGQSYAIIVR…VAFSFGIDRN (1067 aa)). 3 N-linked (GlcNAc...) asparagine glycosylation sites follow: Asn317, Asn466, and Asn552. Residues Asn766, Asn949, Asn983, Asn999, and Asn1073 are each glycosylated (N-linked (GlcNAc...) asparagine). An EGF-like domain is found at 1084–1123 (VQAQCVCEAPLMRRCLNGGSPRYGENDVCDCIDGFTGPHC). 2 disulfides stabilise this stretch: Cys1098–Cys1112 and Cys1114–Cys1123. Positions 1125-1313 (LVSVAFYGSG…SVFRNIDSGC (189 aa)) constitute a Laminin G-like domain. N-linked (GlcNAc...) asparagine glycans are attached at residues Asn1145, Asn1274, and Asn1290. A disulfide bond links Cys1287 and Cys1313. The chain crosses the membrane as a helical span at residues 1329–1349 (FIIAIIVCLALLLIILLAVVV). The Cytoplasmic segment spans residues 1350–1507 (QKKQKNGWHE…NVDDDQGWRI (158 aa)). An interaction with Inx2 region spans residues 1350–1507 (QKKQKNGWHE…NVDDDQGWRI (158 aa)). Positions 1488 to 1507 (YGEEPSDTDSNVDDDQGWRI) are disordered. At Ser1493 the chain carries Phosphoserine.

As to quaternary structure, interacts (via cytoplasmic region) with Inx2 (via cytoplasmic loop). Interacts with Hakai. Interacts with Myo31DF. Post-translationally, N-glycosylation is important for biosynthesis and function. As to expression, in early stage 9 and stage 10 oocytes, expressed in border cells, strongly expressed in polar cells and very weakly expressed in the nurse cells (at protein level). In the embryo, expressed in the leading edge cells of the dorsal epidermis (at protein level). Stage 10 embryos exhibit intense expression in epithelial cells. Stage 14 embryos show expression in the hindgut (at the apical poles of cell-cell boundaries), at the apical junctions of tracheal cells and in the dorsal longitudinal trunk. In stage 16 embryos the glial midline cells of the central nervous system show strong expression.

It is found in the cell membrane. The protein resides in the apical cell membrane. Functionally, cadherins are calcium-dependent cell adhesion proteins. In connecting cells they preferentially interact with themselves in a homophilic manner; cadherins may thus contribute to the sorting of heterogeneous cell types. During oogenesis, integral component of the guidance mechanisms that regulate the directional persistent collective migration of the border cell (BC) cluster through the nurse cells to the oocyte. Functions downstream of the two chemoattractant receptors, Pvr and Egfr, to promote BC adhesion between the leader cells of the migrating cluster and the surrounding nurse cells. This adhesion increases Rac1 signaling in the leading cells, which in turn stabilizes DE-cadherin/DE-cadherin adhesions through the formation of forward-directed protrusions which attach/detach to the surrounding nurse cells in order to pull the cluster through the egg chamber to the oocyte. Within the BC cluster, also promotes adhesion between BCs, and between BCs and polar cells which enables the lead BC to communicate direction to the other cells in the cluster, providing polarity to each individual cell and ensuring collective behavior. May function in cell intercalation in the lateral epidermis during germband extension. Contributes to the determination of body left-right asymmetry by enhancing Myo31DF activity and inhibiting Myo61F activity. The chain is DE-cadherin from Drosophila melanogaster (Fruit fly).